We begin with the raw amino-acid sequence, 235 residues long: Ribosomal RNA large subunit methyltransferase E (235 aa).

Residues Gly-76, Trp-78, Asp-99, Asp-115, and Asp-139 each coordinate S-adenosyl-L-methionine. Catalysis depends on Lys-179, which acts as the Proton acceptor.

The protein belongs to the class I-like SAM-binding methyltransferase superfamily. RNA methyltransferase RlmE family.

Its subcellular location is the cytoplasm. It carries out the reaction uridine(2552) in 23S rRNA + S-adenosyl-L-methionine = 2'-O-methyluridine(2552) in 23S rRNA + S-adenosyl-L-homocysteine + H(+). Specifically methylates the uridine in position 2552 of 23S rRNA at the 2'-O position of the ribose in the fully assembled 50S ribosomal subunit. The chain is Ribosomal RNA large subunit methyltransferase E from Rhodopseudomonas palustris (strain BisA53).